The primary structure comprises 554 residues: Valerianol synthase TPS1C (554 aa).

The Mg(2+) site is built by D307 and D311. A DDXXD motif motif is present at residues 326 to 330 (VQRWD). Positions 452, 456, and 460 each coordinate Mg(2+).

This sequence belongs to the terpene synthase family. Mg(2+) is required as a cofactor.

It carries out the reaction (2E,6E)-farnesyl diphosphate + H2O = valerianol + diphosphate. Its pathway is secondary metabolite biosynthesis; terpenoid biosynthesis. Terpene synthase that catalyzes the biosynthesis of the terpene valerianol, which is a volatile compound of floral scent. This chain is Valerianol synthase TPS1C, found in Camellia hiemalis (Camellia).